The following is a 250-amino-acid chain: Functional amyloid sbunit FapE (250 aa).

Residues 1–27 form the signal peptide; it reads MLREHAMYTHHCFVLACCLGAALPAPA.

It belongs to the FapE family. As to quaternary structure, a minor component of purified amyloid fibrils. Fibrils are resistant to boiling in 2% (weight/vol) SDS and require &gt;90% (vol/vol) formic acid to dissolve.

The protein localises to the fimbrium. Its subcellular location is the secreted. In terms of biological role, a minor component of the functional amyloid in this bacterium. Upon overexpression of the endogenous six-gene locus (fapA-fapF), cells form large clumps during liquid growth, make large amounts of biofilm and produce amyloid fibrils. This Pseudomonas aeruginosa (strain ATCC 15692 / DSM 22644 / CIP 104116 / JCM 14847 / LMG 12228 / 1C / PRS 101 / PAO1) protein is Functional amyloid sbunit FapE.